The primary structure comprises 298 residues: Leucine-rich repeat-containing protein 38 (298 aa).

The signal sequence occupies residues 1–31 (MSLCVAPRHPTGAAAALGLGSLLVLLGPGRA). Disulfide bonds link Cys-32/Cys-38 and Cys-36/Cys-46. Residues 32 to 60 (CPAGCACTDPHTVDCRDRGLPSVPDPFPL) form the LRRNT domain. The Extracellular portion of the chain corresponds to 32 to 251 (CPAGCACTDP…ECKFSLSLTD (220 aa)). LRR repeat units lie at residues 61–82 (DVRK…FFIF), 85–106 (DLVY…TFSG), 109–130 (KLAF…AFRS), 133–154 (RLVK…AFES), and 157–177 (SLQV…AALD). The N-linked (GlcNAc...) asparagine glycan is linked to Asn-119. One can recognise an LRRCT domain in the interval 190 to 245 (NPWLCDCDFAHLFSWIQENTSKLPKGLDAIQCSLPMEDRRVALRELSEASFSECKF). Disulfide bonds link Cys-194–Cys-221 and Cys-196–Cys-243. Residues 252–272 (LFIIIFSGVAVSIAAIISSFF) form a helical membrane-spanning segment. The Cytoplasmic portion of the chain corresponds to 273–298 (LATVVQCFQRCAPNKDTEDEDDDEDD).

Interacts with KCNMA1.

It is found in the cell membrane. Auxiliary protein of the large-conductance, voltage and calcium-activated potassium channel (BK alpha). Modulates gating properties by producing a marked shift in the BK channel's voltage dependence of activation in the hyperpolarizing direction, and in the absence of calcium. The polypeptide is Leucine-rich repeat-containing protein 38 (Lrrc38) (Mus musculus (Mouse)).